The chain runs to 255 residues: Post-GPI attachment to proteins factor 2 (255 aa).

The next 5 helical transmembrane spans lie at 23–43 (LALV…IWSL), 111–131 (LGIL…CLSF), 143–163 (NAFV…YLLN), 185–205 (LFLV…RHNS), and 209–229 (AGVY…NMGF).

It belongs to the PGAP2 family.

The protein localises to the golgi apparatus membrane. The protein resides in the endoplasmic reticulum membrane. Its function is as follows. Involved in the lipid remodeling steps of GPI-anchor maturation. Required for stable expression of GPI-anchored proteins at the cell surface. The sequence is that of Post-GPI attachment to proteins factor 2 from Drosophila melanogaster (Fruit fly).